Consider the following 79-residue polypeptide: Hematopoietic cell signal transducer (79 aa).

The first 18 residues, 1–18 (MIHPGHILFLLLLPVAAA), serve as a signal peptide directing secretion. The Extracellular portion of the chain corresponds to 19 to 34 (QTTPGSCSGCGSLSLP). Residues 35–55 (LLAGLVAADAVASPLIVGAVF) form a helical membrane-spanning segment. The Cytoplasmic portion of the chain corresponds to 56–79 (LCARPRRSPAQGDGKVYINMPGRG). Tyrosine 72 bears the Phosphotyrosine mark. A GRB2 binding site region spans residues 72–74 (YIN). The tract at residues 72-75 (YINM) is PIK3R1 binding site.

This sequence belongs to the DAP10 family. Homodimer; Disulfide-linked. Heterohexamer composed of four subunits of HCST/DAP10 and two subunits of KLRK1. Interacts (via transmembrane domain) with KLRK1 (via transmembrane domain); the interaction is required for KLRK1 NK cell surface and induces NK cell-mediated cytotoxicity. Interacts with PIK3R1 and GRB2. Interacts with CLEC5A. Forms an CLEC5A/TYROBP/HCST trimolecular complex depending almost solely on TYROBP. Interacts with CD300H. Phosphorylated; PIK3R1 and GRB2 associate specifically with tyrosine-phosphorylated HCST. Post-translationally, O-glycosylated.

It is found in the membrane. Functionally, transmembrane adapter protein which associates with KLRK1 to form an activation receptor KLRK1-HCST in lymphoid and myeloid cells; this receptor plays a major role in triggering cytotoxicity against target cells expressing cell surface ligands such as MHC class I chain-related MICA and MICB, and UL16-binding proteins (ULBPs); these ligands are up-regulated by stress conditions and pathological state such as viral infection and tumor transformation. Functions as a docking site for PI3-kinase PIK3R1 and GRB2. Interaction of ULBPs with KLRK1-HCST triggers calcium mobilization and activation of the PIK3R1, MAP2K/ERK, and JAK2/STAT5 signaling pathways. Both PIK3R1 and GRB2 are required for full KLRK1-HCST-mediated activation and ultimate killing of target cells. In NK cells, KLRK1-HCST signaling directly induces cytotoxicity and enhances cytokine production initiated via DAP12/TYROBP-associated receptors. In T-cells, it provides primarily costimulation for TCR-induced signals. KLRK1-HCST receptor plays a role in immune surveillance against tumors and is required for cytolysis of tumors cells; indeed, melanoma cells that do not express KLRK1 ligands escape from immune surveillance mediated by NK cells. The polypeptide is Hematopoietic cell signal transducer (HCST) (Macaca mulatta (Rhesus macaque)).